The sequence spans 65 residues: Large ribosomal subunit protein bL35 (65 aa).

It belongs to the bacterial ribosomal protein bL35 family.

The polypeptide is Large ribosomal subunit protein bL35 (Synechococcus sp. (strain CC9311)).